The primary structure comprises 807 residues: Ribosomal RNA large subunit methyltransferase K/L (807 aa).

The region spanning 67–182 is the THUMP domain; the sequence is QIYKICLWSR…EKQAEIFLDL (116 aa). The segment covering 548–560 has biased composition (polar residues); it reads NTQYGNPEASAQS. Positions 548–602 are disordered; sequence NTQYGNPEASAQSKESKNAPEPKKDNRNRYKGNKFQQAREEAKRQEAQRLAQKKR. 2 stretches are compositionally biased toward basic and acidic residues: residues 561–575 and 584–594; these read KESK…DNRN and QAREEAKRQEA.

This sequence belongs to the methyltransferase superfamily. RlmKL family.

It localises to the cytoplasm. The enzyme catalyses guanosine(2445) in 23S rRNA + S-adenosyl-L-methionine = N(2)-methylguanosine(2445) in 23S rRNA + S-adenosyl-L-homocysteine + H(+). It carries out the reaction guanosine(2069) in 23S rRNA + S-adenosyl-L-methionine = N(2)-methylguanosine(2069) in 23S rRNA + S-adenosyl-L-homocysteine + H(+). In terms of biological role, specifically methylates the guanine in position 2445 (m2G2445) and the guanine in position 2069 (m7G2069) of 23S rRNA. The sequence is that of Ribosomal RNA large subunit methyltransferase K/L from Psychrobacter sp. (strain PRwf-1).